The sequence spans 118 residues: Cell division protein FtsB (118 aa).

The Cytoplasmic portion of the chain corresponds to 1 to 6; the sequence is MRNWRW. The helical transmembrane segment at 7-24 threads the bilayer; sequence LLLVLAALLAWLQHRFWF. Residues 25–118 lie on the Periplasmic side of the membrane; it reads GPGNSGEVRM…DLSQPRREKR (94 aa). A coiled-coil region spans residues 30–66; that stretch reads GEVRMLQVQIVQQHQENERLRQRNASLAAEVKNLKDG. Residues 98 to 118 form a disordered region; it reads LPNDTSADHGVDLSQPRREKR. Residues 103 to 118 show a composition bias toward basic and acidic residues; that stretch reads SADHGVDLSQPRREKR.

This sequence belongs to the FtsB family. In terms of assembly, part of a complex composed of FtsB, FtsL and FtsQ.

It is found in the cell inner membrane. In terms of biological role, essential cell division protein. May link together the upstream cell division proteins, which are predominantly cytoplasmic, with the downstream cell division proteins, which are predominantly periplasmic. The polypeptide is Cell division protein FtsB (Xylella fastidiosa (strain M23)).